The primary structure comprises 604 residues: Threonine--tRNA ligase (604 aa).

Residues 209 to 500 (DHRKLGQEMG…LTEHFGGEFP (292 aa)) form a catalytic region. Positions 301, 352, and 477 each coordinate Zn(2+).

This sequence belongs to the class-II aminoacyl-tRNA synthetase family. Homodimer. Requires Zn(2+) as cofactor.

The protein resides in the cytoplasm. It catalyses the reaction tRNA(Thr) + L-threonine + ATP = L-threonyl-tRNA(Thr) + AMP + diphosphate + H(+). Its function is as follows. Catalyzes the attachment of threonine to tRNA(Thr) in a two-step reaction: L-threonine is first activated by ATP to form Thr-AMP and then transferred to the acceptor end of tRNA(Thr). Also edits incorrectly charged L-seryl-tRNA(Thr). This is Threonine--tRNA ligase from Helicobacter hepaticus (strain ATCC 51449 / 3B1).